Consider the following 335-residue polypeptide: Phosphate acyltransferase (335 aa).

It belongs to the PlsX family. As to quaternary structure, homodimer. Probably interacts with PlsY.

It is found in the cytoplasm. It catalyses the reaction a fatty acyl-[ACP] + phosphate = an acyl phosphate + holo-[ACP]. The protein operates within lipid metabolism; phospholipid metabolism. Catalyzes the reversible formation of acyl-phosphate (acyl-PO(4)) from acyl-[acyl-carrier-protein] (acyl-ACP). This enzyme utilizes acyl-ACP as fatty acyl donor, but not acyl-CoA. In Heliobacterium modesticaldum (strain ATCC 51547 / Ice1), this protein is Phosphate acyltransferase.